A 201-amino-acid chain; its full sequence is Protocatechuate 3,4-dioxygenase alpha chain (201 aa).

Arg-134 is a 3,4-dihydroxybenzoate binding site.

Belongs to the intradiol ring-cleavage dioxygenase family. The enzyme is an oligomer of 12 copies of the alpha and beta chains. The cofactor is Fe(3+).

It carries out the reaction 3,4-dihydroxybenzoate + O2 = 3-carboxy-cis,cis-muconate + 2 H(+). Its pathway is aromatic compound metabolism; beta-ketoadipate pathway; 3-carboxy-cis,cis-muconate from 3,4-dihydroxybenzoate: step 1/1. Plays an essential role in the utilization of numerous aromatic and hydroaromatic compounds via the beta-ketoadipate pathway. This Pseudomonas putida (Arthrobacter siderocapsulatus) protein is Protocatechuate 3,4-dioxygenase alpha chain (pcaG).